Reading from the N-terminus, the 859-residue chain is Leucine--tRNA ligase (859 aa).

Residues Pro42–His52 carry the 'HIGH' region motif. The 'KMSKS' region motif lies at Lys618–Ser622. Lys621 is a binding site for ATP.

It belongs to the class-I aminoacyl-tRNA synthetase family.

It is found in the cytoplasm. It catalyses the reaction tRNA(Leu) + L-leucine + ATP = L-leucyl-tRNA(Leu) + AMP + diphosphate. In Shewanella oneidensis (strain ATCC 700550 / JCM 31522 / CIP 106686 / LMG 19005 / NCIMB 14063 / MR-1), this protein is Leucine--tRNA ligase.